We begin with the raw amino-acid sequence, 170 residues long: Crossover junction endodeoxyribonuclease RuvC (170 aa).

Active-site residues include Asp11, Glu71, and Asp143. Residues Asp11, Glu71, and Asp143 each contribute to the Mg(2+) site.

It belongs to the RuvC family. As to quaternary structure, homodimer which binds Holliday junction (HJ) DNA. The HJ becomes 2-fold symmetrical on binding to RuvC with unstacked arms; it has a different conformation from HJ DNA in complex with RuvA. In the full resolvosome a probable DNA-RuvA(4)-RuvB(12)-RuvC(2) complex forms which resolves the HJ. It depends on Mg(2+) as a cofactor.

The protein localises to the cytoplasm. The catalysed reaction is Endonucleolytic cleavage at a junction such as a reciprocal single-stranded crossover between two homologous DNA duplexes (Holliday junction).. The RuvA-RuvB-RuvC complex processes Holliday junction (HJ) DNA during genetic recombination and DNA repair. Endonuclease that resolves HJ intermediates. Cleaves cruciform DNA by making single-stranded nicks across the HJ at symmetrical positions within the homologous arms, yielding a 5'-phosphate and a 3'-hydroxyl group; requires a central core of homology in the junction. The consensus cleavage sequence is 5'-(A/T)TT(C/G)-3'. Cleavage occurs on the 3'-side of the TT dinucleotide at the point of strand exchange. HJ branch migration catalyzed by RuvA-RuvB allows RuvC to scan DNA until it finds its consensus sequence, where it cleaves and resolves the cruciform DNA. This Rhizobium rhizogenes (strain K84 / ATCC BAA-868) (Agrobacterium radiobacter) protein is Crossover junction endodeoxyribonuclease RuvC.